The primary structure comprises 428 residues: D-amino acid dehydrogenase (428 aa).

Position 3-17 (3-17 (VVILGSGVVGVASAY)) interacts with FAD.

It belongs to the DadA oxidoreductase family. The cofactor is FAD.

The catalysed reaction is a D-alpha-amino acid + A + H2O = a 2-oxocarboxylate + AH2 + NH4(+). It participates in amino-acid degradation; D-alanine degradation; NH(3) and pyruvate from D-alanine: step 1/1. Functionally, oxidative deamination of D-amino acids. The polypeptide is D-amino acid dehydrogenase (Burkholderia cenocepacia (strain HI2424)).